The chain runs to 940 residues: UvrABC system protein A (940 aa).

31–38 (GLSGSGKS) is an ATP binding site. The C4-type zinc finger occupies 252–279 (CPHCGYSMQELEPRLFSFNNPAGACGTC). ABC transporter domains follow at residues 309–586 (WDQK…PDSL) and 606–936 (RDKN…RFLK). Position 639–646 (639–646 (GVSGSGKS)) interacts with ATP. The C4-type zinc finger occupies 739-765 (CEACQGDGVIKVEMHFLPDVYVPCDVC).

This sequence belongs to the ABC transporter superfamily. UvrA family. As to quaternary structure, forms a heterotetramer with UvrB during the search for lesions.

It is found in the cytoplasm. The UvrABC repair system catalyzes the recognition and processing of DNA lesions. UvrA is an ATPase and a DNA-binding protein. A damage recognition complex composed of 2 UvrA and 2 UvrB subunits scans DNA for abnormalities. When the presence of a lesion has been verified by UvrB, the UvrA molecules dissociate. The sequence is that of UvrABC system protein A from Vibrio vulnificus (strain CMCP6).